Consider the following 409-residue polypeptide: Putative lipoate-protein ligase A (409 aa).

The BPL/LPL catalytic domain occupies G146–G330. Residues R188, G193–L196, and K249 contribute to the ATP site. K249 lines the (R)-lipoate pocket.

Belongs to the LplA family. Monomer.

The catalysed reaction is L-lysyl-[lipoyl-carrier protein] + (R)-lipoate + ATP = N(6)-[(R)-lipoyl]-L-lysyl-[lipoyl-carrier protein] + AMP + diphosphate + H(+). Its pathway is protein modification; protein lipoylation via exogenous pathway; protein N(6)-(lipoyl)lysine from lipoate: step 1/2. It participates in protein modification; protein lipoylation via exogenous pathway; protein N(6)-(lipoyl)lysine from lipoate: step 2/2. Catalyzes both the ATP-dependent activation of exogenously supplied lipoate to lipoyl-AMP and the transfer of the activated lipoyl onto the lipoyl domains of lipoate-dependent enzymes. The protein is Putative lipoate-protein ligase A (AIM22) of Saccharomyces cerevisiae (strain ATCC 204508 / S288c) (Baker's yeast).